Reading from the N-terminus, the 444-residue chain is Glutamate--tRNA ligase 2 (444 aa).

The short motif at 7 to 17 (PSPTGYLHVGN) is the 'HIGH' region element. The 'KMSKS' region motif lies at 240–244 (KLSKR). An ATP-binding site is contributed by Lys243.

The protein belongs to the class-I aminoacyl-tRNA synthetase family. Glutamate--tRNA ligase type 1 subfamily. Monomer.

It localises to the cytoplasm. It carries out the reaction tRNA(Glu) + L-glutamate + ATP = L-glutamyl-tRNA(Glu) + AMP + diphosphate. Functionally, catalyzes the attachment of glutamate to tRNA(Glu) in a two-step reaction: glutamate is first activated by ATP to form Glu-AMP and then transferred to the acceptor end of tRNA(Glu). This Gluconobacter oxydans (strain 621H) (Gluconobacter suboxydans) protein is Glutamate--tRNA ligase 2.